The sequence spans 125 residues: MPTSNQSIRHGREKKRRTDRTRALEKCPQKRGVCLRVSTRTPKKPNSALRKIAKVRLSNRHDIFAYIPGEGHNLQEHSMVLIRGGRVKDLPGVKFHRIRGVKDLLGIPGRKRGRSKYGAERPKSK.

A disordered region spans residues 1–24; that stretch reads MPTSNQSIRHGREKKRRTDRTRAL. A compositionally biased stretch (basic residues) spans 9–19; it reads RHGREKKRRTD.

This sequence belongs to the universal ribosomal protein uS12 family.

It is found in the mitochondrion. Its function is as follows. Protein S12 is involved in the translation initiation step. This is Small ribosomal subunit protein uS12m (RPS12) from Pinus sylvestris (Scotch pine).